A 407-amino-acid chain; its full sequence is Divalent metal cation transporter MntH (407 aa).

11 helical membrane passes run 16 to 36 (LTLL…GNFA), 43 to 63 (STFG…AMLV), 95 to 115 (WVQA…GAAV), 119 to 139 (LLLG…TWGI), 152 to 172 (FVVG…LVFS), 193 to 213 (AVYL…IYLH), 239 to 259 (IAMT…AAAF), 288 to 308 (LFGL…TLAG), 318 to 338 (FTIP…VVIA), 346 to 366 (ILVL…IPLL), and 387 to 407 (VGRL…VAMI).

This sequence belongs to the NRAMP family.

Its subcellular location is the cell inner membrane. Its function is as follows. H(+)-stimulated, divalent metal cation uptake system. The chain is Divalent metal cation transporter MntH from Aeromonas hydrophila subsp. hydrophila (strain ATCC 7966 / DSM 30187 / BCRC 13018 / CCUG 14551 / JCM 1027 / KCTC 2358 / NCIMB 9240 / NCTC 8049).